Here is a 250-residue protein sequence, read N- to C-terminus: 2,3-bisphosphoglycerate-dependent phosphoglycerate mutase (250 aa).

Residues 10-17 (RHGESQWN), 23-24 (TG), Arg62, 89-92 (ERHY), Lys100, 116-117 (RR), and 185-186 (GN) contribute to the substrate site. His11 acts as the Tele-phosphohistidine intermediate in catalysis. Glu89 acts as the Proton donor/acceptor in catalysis.

The protein belongs to the phosphoglycerate mutase family. BPG-dependent PGAM subfamily. In terms of assembly, homodimer.

It carries out the reaction (2R)-2-phosphoglycerate = (2R)-3-phosphoglycerate. The protein operates within carbohydrate degradation; glycolysis; pyruvate from D-glyceraldehyde 3-phosphate: step 3/5. In terms of biological role, catalyzes the interconversion of 2-phosphoglycerate and 3-phosphoglycerate. This Erwinia tasmaniensis (strain DSM 17950 / CFBP 7177 / CIP 109463 / NCPPB 4357 / Et1/99) protein is 2,3-bisphosphoglycerate-dependent phosphoglycerate mutase.